Reading from the N-terminus, the 78-residue chain is RNA-binding protein KhpA (78 aa).

Residues 29–78 enclose the KH domain; that stretch reads TIIYELTVAKGDIGKIIGKEGRTIKAIRTLLVSVASRDNVKVSLEIMEER.

The protein belongs to the KhpA RNA-binding protein family.

It is found in the cytoplasm. Functionally, a probable RNA-binding protein. This chain is RNA-binding protein KhpA, found in Chlamydia muridarum (strain MoPn / Nigg).